The chain runs to 279 residues: Tryptophan 2,3-dioxygenase (279 aa).

Substrate contacts are provided by residues 48–52 (FIVIH), Tyr-110, and Arg-114. Residue His-237 coordinates heme. Thr-251 contributes to the substrate binding site.

Belongs to the tryptophan 2,3-dioxygenase family. Homotetramer. It depends on heme as a cofactor.

It carries out the reaction L-tryptophan + O2 = N-formyl-L-kynurenine. Its pathway is amino-acid degradation; L-tryptophan degradation via kynurenine pathway; L-kynurenine from L-tryptophan: step 1/2. In terms of biological role, heme-dependent dioxygenase that catalyzes the oxidative cleavage of the L-tryptophan (L-Trp) pyrrole ring and converts L-tryptophan to N-formyl-L-kynurenine. Catalyzes the oxidative cleavage of the indole moiety. The chain is Tryptophan 2,3-dioxygenase from Bacillus cereus (strain ATCC 10987 / NRS 248).